A 381-amino-acid chain; its full sequence is Putative 8-amino-7-oxononanoate synthase (381 aa).

Arg22 provides a ligand contact to substrate. Pyridoxal 5'-phosphate is bound at residue 109-110 (GF). A substrate-binding site is contributed by His134. Residues Ser182, 207–210 (DDAH), and 233–236 (TLSK) contribute to the pyridoxal 5'-phosphate site. At Lys236 the chain carries N6-(pyridoxal phosphate)lysine. Thr345 contacts substrate.

This sequence belongs to the class-II pyridoxal-phosphate-dependent aminotransferase family. BioF subfamily. In terms of assembly, homodimer. Pyridoxal 5'-phosphate serves as cofactor.

It carries out the reaction 6-carboxyhexanoyl-[ACP] + L-alanine + H(+) = (8S)-8-amino-7-oxononanoate + holo-[ACP] + CO2. Its pathway is cofactor biosynthesis; biotin biosynthesis. Functionally, catalyzes the decarboxylative condensation of pimeloyl-[acyl-carrier protein] and L-alanine to produce 8-amino-7-oxononanoate (AON), [acyl-carrier protein], and carbon dioxide. The polypeptide is Putative 8-amino-7-oxononanoate synthase (bioF) (Acidiphilium cryptum (strain JF-5)).